The chain runs to 446 residues: Citrate/sodium symporter (446 aa).

5 consecutive transmembrane segments (helical) span residues 23–43 (IFGMPLPLYAFALITLLLSHF), 46–66 (AIPTDLVGGFALMFVMGAIFG), 79–99 (IGGAPVMIFLVAAYFVYAGIF), 110–130 (VMDKSNFLNLFIAVLITGAIL), and 148–168 (ILAGIVGASLFGIVIGLCFGI). Residues I181 and G183 each coordinate Na(+). Citrate contacts are provided by N186 and G187. 5 helical membrane passes run 213-233 (IAILTIANIFAIIFAALLDMI), 267-287 (ETAVGMVLSTTCFLLAYVVAK), 289-309 (ILPSIGGVSIHYFAWMVLIVA), 335-355 (QLLWVLMVGVGVCYTDLQEII), and 364-384 (VIAAIIVVGAVVGAAIGGWLI). The Na(+) site is built by M399 and N401. Citrate-binding residues include R402, G404, S405, and R428. The helical transmembrane segment at 425–445 (ISSRLGGGIVLVIASIVFSMM) threads the bilayer.

The protein belongs to the 2-hydroxycarboxylate transporter (2-HCT) (TC 2.A.24) family. As to quaternary structure, homodimer.

The protein resides in the cell inner membrane. The catalysed reaction is citrate(out) + 2 Na(+)(out) = citrate(in) + 2 Na(+)(in). Functionally, secondary active transporter that catalyzes the uptake of citrate across the membrane with the concomitant uptake of sodium. Is specific for citrate. This chain is Citrate/sodium symporter, found in Salmonella pullorum.